We begin with the raw amino-acid sequence, 1843 residues long: Zinc finger protein 142 (1843 aa).

C2H2-type zinc fingers lie at residues 103-127 and 164-186; these read YFCE…TETH and LPCP…FKIH. Residues 294–357 form a disordered region; that stretch reads PAAKLPPGHR…LEGHVGSGTE (64 aa). Positions 318–329 are enriched in acidic residues; that stretch reads SAEEEDAEEEES. The span at 330-340 shows a compositional bias: basic and acidic residues; the sequence is VTQKDSQKVMD. S354 carries the post-translational modification Phosphoserine. The segment at 363–385 adopts a C2H2-type 3 zinc-finger fold; sequence HMCPECKRCFKKRTHLVEHLHLH. Residues 391-413 form a C2H2-type 4; degenerate zinc finger; sequence LQCPNCQKFFTSKSKLKTHLLRE. C2H2-type zinc fingers lie at residues 453-475, 543-566, 601-623, 629-651, 657-679, 685-707, and 744-767; these read YACP…LKSH, FHCP…KQGH, HQCS…MLLH, HKCE…MLTH, YMCT…MRKH, YQCN…KLRH, and YPCR…NCKH. K794 is covalently cross-linked (Glycyl lysine isopeptide (Lys-Gly) (interchain with G-Cter in SUMO2)). 2 disordered regions span residues 819–888 and 1103–1177; these read QCLA…LGEV and PKPV…TGTS. Positions 837–846 are enriched in basic and acidic residues; that stretch reads PEREDREHEI. Residues 1157-1167 show a composition bias toward pro residues; that stretch reads LPTPSDFPTSP. Residues 1168–1177 are compositionally biased toward polar residues; the sequence is PENSLPTGTS. 9 C2H2-type zinc fingers span residues 1331 to 1354, 1388 to 1411, 1446 to 1469, 1514 to 1537, 1608 to 1630, 1636 to 1658, 1664 to 1686, 1692 to 1715, and 1721 to 1743; these read LQCG…RLKH, IPCS…LRVH, FSCT…LRRH, LECG…RQHH, YKCT…SRIH, YHCH…MRIH, YLCP…MTKH, YQCP…ETRH, and FMCE…LRKH. Glycyl lysine isopeptide (Lys-Gly) (interchain with G-Cter in SUMO2) cross-links involve residues K1353 and K1402. K1747 is covalently cross-linked (Glycyl lysine isopeptide (Lys-Gly) (interchain with G-Cter in SUMO2)). The segment at 1749–1771 adopts a C2H2-type 21 zinc-finger fold; that stretch reads YVCNVCHRAFRWAAGLRHHALTH. The segment at 1795-1843 is disordered; it reads HVRRHHPDQADPNQGVGKDPTTPTVHLHDVKLEDPSPPAPPAPSTGPEG. Residues 1829-1843 are compositionally biased toward pro residues; sequence PSPPAPPAPSTGPEG.

Belongs to the krueppel C2H2-type zinc-finger protein family.

It localises to the nucleus. May be involved in transcriptional regulation. The chain is Zinc finger protein 142 from Mus musculus (Mouse).